The chain runs to 92 residues: Cell division topological specificity factor (92 aa).

Belongs to the MinE family.

Its function is as follows. Prevents the cell division inhibition by proteins MinC and MinD at internal division sites while permitting inhibition at polar sites. This ensures cell division at the proper site by restricting the formation of a division septum at the midpoint of the long axis of the cell. The sequence is that of Cell division topological specificity factor from Colwellia psychrerythraea (strain 34H / ATCC BAA-681) (Vibrio psychroerythus).